The chain runs to 272 residues: MTHHDAQPSTDAEQSSNATLPHILICNDDGIEADGIHALATAMKKVGRVTVVAPAEPHSAMSHAMTLGRPLRIKEYQKNGRFFGYTVSGTPVDCIKVALSHILTEKPDILVSGINYGSNTATNTLYSGTVAAALEGAIQGITSLAFSLATYENADFTYATKFARKLTKKVLAEGLPADTILSVNIPNVPESQIAGVIIAEQGSSRWEEQAIERHDMFGNPYYWLSGSLQLMDHSMKKDEFAVRHNYVAVTPISCDLTNYAALAGLEKWKLKK.

A divalent metal cation contacts are provided by aspartate 28, aspartate 29, serine 59, and asparagine 115.

It belongs to the SurE nucleotidase family. A divalent metal cation is required as a cofactor.

Its subcellular location is the cytoplasm. The enzyme catalyses a ribonucleoside 5'-phosphate + H2O = a ribonucleoside + phosphate. Functionally, nucleotidase that shows phosphatase activity on nucleoside 5'-monophosphates. The sequence is that of 5'-nucleotidase SurE from Chlorobium chlorochromatii (strain CaD3).